The primary structure comprises 430 residues: Endo-beta-1,4-glucanase celB (430 aa).

The N-terminal stretch at M1–A16 is a signal peptide. N-linked (GlcNAc...) asparagine glycans are attached at residues N43 and N153. E216 serves as the catalytic Nucleophile. The active-site Proton donor is E221. N-linked (GlcNAc...) asparagine glycosylation is present at N395.

The protein belongs to the glycosyl hydrolase 7 (cellulase C) family.

It localises to the secreted. The catalysed reaction is Endohydrolysis of (1-&gt;4)-beta-D-glucosidic linkages in cellulose, lichenin and cereal beta-D-glucans.. In terms of biological role, has endoglucanase activity on substrates containing beta-1,4 glycosidic bonds, like in carboxymethylcellulose (CMC), hydroxyethylcellulose (HEC) and beta-glucan. Involved in the degradation of complex natural cellulosic substrates. The protein is Endo-beta-1,4-glucanase celB (celB) of Emericella nidulans (strain FGSC A4 / ATCC 38163 / CBS 112.46 / NRRL 194 / M139) (Aspergillus nidulans).